The primary structure comprises 138 residues: Protein FAM136A (138 aa).

N-acetylalanine is present on alanine 2. 2 positions are modified to phosphothreonine: threonine 124 and threonine 126.

Belongs to the FAM136 family.

The polypeptide is Protein FAM136A (Fam136a) (Mus musculus (Mouse)).